Consider the following 366-residue polypeptide: GTP cyclohydrolase 1 type 2 homolog (366 aa).

Histidine 64, histidine 65, aspartate 102, histidine 326, and glutamate 329 together coordinate a divalent metal cation.

It belongs to the GTP cyclohydrolase I type 2/NIF3 family. In terms of assembly, homohexamer.

This is GTP cyclohydrolase 1 type 2 homolog from Staphylococcus epidermidis (strain ATCC 12228 / FDA PCI 1200).